Reading from the N-terminus, the 477-residue chain is UDP-sulfoquinovose synthase, chloroplastic (477 aa).

Residues 1–21 (MAHLLSASCPSVISLSSSSSK) are disordered. Residues 1–86 (MAHLLSASCP…TNNSSSKPKR (86 aa)) constitute a chloroplast transit peptide. NAD(+) contacts are provided by residues 95-96 (YC), 115-119 (DNLVR), 158-159 (DI), R184, and N202. R184 contributes to the substrate binding site. 2 residues coordinate substrate: T228 and Y265. Residue T228 is part of the active site. Y265 and K269 together coordinate NAD(+). Y265 serves as the catalytic Proton acceptor. K269 is a catalytic residue. Q292 provides a ligand contact to substrate. V295 provides a ligand contact to NAD(+). Substrate contacts are provided by residues 322-325 (ALNR), 337-339 (TVY), and 410-412 (RVE).

It belongs to the NAD(P)-dependent epimerase/dehydratase family. As to quaternary structure, homodimer. NAD(+) serves as cofactor.

It localises to the plastid. The protein resides in the chloroplast. The enzyme catalyses sulfite + UDP-alpha-D-glucose + H(+) = UDP-alpha-D-6-sulfoquinovose + H2O. Its activity is regulated as follows. Concentrations above 100 uM sulfite inhibit the reaction. In terms of biological role, involved in the biosynthesis of sulfolipids found in thylakoid membranes. Converts UDP-glucose and sulfite to the sulfolipid head group precursor UDP-sulfoquinovose. In Arabidopsis thaliana (Mouse-ear cress), this protein is UDP-sulfoquinovose synthase, chloroplastic (SQD1).